The chain runs to 87 residues: Small ribosomal subunit protein bS20 (87 aa).

The disordered stretch occupies residues methionine 1–threonine 26.

The protein belongs to the bacterial ribosomal protein bS20 family.

Binds directly to 16S ribosomal RNA. The chain is Small ribosomal subunit protein bS20 from Nitratidesulfovibrio vulgaris (strain DSM 19637 / Miyazaki F) (Desulfovibrio vulgaris).